A 150-amino-acid polypeptide reads, in one-letter code: Endoribonuclease YbeY (150 aa).

Positions 113, 117, and 123 each coordinate Zn(2+).

The protein belongs to the endoribonuclease YbeY family. Zn(2+) serves as cofactor.

Its subcellular location is the cytoplasm. In terms of biological role, single strand-specific metallo-endoribonuclease involved in late-stage 70S ribosome quality control and in maturation of the 3' terminus of the 16S rRNA. The protein is Endoribonuclease YbeY of Syntrophotalea carbinolica (strain DSM 2380 / NBRC 103641 / GraBd1) (Pelobacter carbinolicus).